A 454-amino-acid chain; its full sequence is Bifunctional protein GlmU (454 aa).

Residues 1-229 (MQRYAVVLAA…FDEIMGVNDR (229 aa)) are pyrophosphorylase. UDP-N-acetyl-alpha-D-glucosamine contacts are provided by residues 8 to 11 (LAAG), lysine 22, glutamine 72, and 77 to 78 (GT). Residue aspartate 102 participates in Mg(2+) binding. 3 residues coordinate UDP-N-acetyl-alpha-D-glucosamine: glycine 139, glutamate 154, and asparagine 227. A Mg(2+)-binding site is contributed by asparagine 227. Residues 230–250 (VALSKAEQAMRQRINEYHMRN) form a linker region. An N-acetyltransferase region spans residues 251-454 (GVTLIDPSST…KPGYLNKNKE (204 aa)). UDP-N-acetyl-alpha-D-glucosamine-binding residues include arginine 332 and lysine 350. Catalysis depends on histidine 362, which acts as the Proton acceptor. Residues tyrosine 365 and asparagine 376 each contribute to the UDP-N-acetyl-alpha-D-glucosamine site. Residues 385–386 (NY), alanine 422, and arginine 439 each bind acetyl-CoA.

It in the N-terminal section; belongs to the N-acetylglucosamine-1-phosphate uridyltransferase family. In the C-terminal section; belongs to the transferase hexapeptide repeat family. In terms of assembly, homotrimer. Requires Mg(2+) as cofactor.

It localises to the cytoplasm. The catalysed reaction is alpha-D-glucosamine 1-phosphate + acetyl-CoA = N-acetyl-alpha-D-glucosamine 1-phosphate + CoA + H(+). It carries out the reaction N-acetyl-alpha-D-glucosamine 1-phosphate + UTP + H(+) = UDP-N-acetyl-alpha-D-glucosamine + diphosphate. It functions in the pathway nucleotide-sugar biosynthesis; UDP-N-acetyl-alpha-D-glucosamine biosynthesis; N-acetyl-alpha-D-glucosamine 1-phosphate from alpha-D-glucosamine 6-phosphate (route II): step 2/2. Its pathway is nucleotide-sugar biosynthesis; UDP-N-acetyl-alpha-D-glucosamine biosynthesis; UDP-N-acetyl-alpha-D-glucosamine from N-acetyl-alpha-D-glucosamine 1-phosphate: step 1/1. The protein operates within bacterial outer membrane biogenesis; LPS lipid A biosynthesis. In terms of biological role, catalyzes the last two sequential reactions in the de novo biosynthetic pathway for UDP-N-acetylglucosamine (UDP-GlcNAc). The C-terminal domain catalyzes the transfer of acetyl group from acetyl coenzyme A to glucosamine-1-phosphate (GlcN-1-P) to produce N-acetylglucosamine-1-phosphate (GlcNAc-1-P), which is converted into UDP-GlcNAc by the transfer of uridine 5-monophosphate (from uridine 5-triphosphate), a reaction catalyzed by the N-terminal domain. In Staphylococcus carnosus (strain TM300), this protein is Bifunctional protein GlmU.